The chain runs to 502 residues: MEFSVKSGSPEKQRSACIVVGVFEPRRLSPIAEQLDKISGGYISSLLRRGDLEGKPGQMLLLHQVPNILSERVLLVGCGKERELGERQYKDIIKKTISTLNETGSMEAVCFLTELHVKGRDTYWKVRQAVESTKDSLYTFNQFKSNKPETRRPLRKLVFNVPTRRELNLGEKAIAHGLSIASGVKASKDLGNMPPNVANPAYLASQARRLADDYETVTTKIIGEEEMKKLGMTSYLAVGQGSHNESMMSIMEYKGHPDPTAKPIVLIGKGLTFDSGGISIKPSEGMDEMKYDMCGAASVFGAMKALAKLNLPLNVVGVLAGCENMPSSNSYRPGDILTTMSGQTVEVLNTDAEGRLVLCDALTYVERYEPECVVDVATLTGACVVALGHHISGLISNHNPLAHELINASEQSGDRAWRLPMAEEYNEQLSSPFADMGNIGGKAAGTITAGCFLSRFAKKYHWAHIDSAGTAWVSGANKGSTGRPVSLLVQFLLNRSGQENEE.

Mn(2+) contacts are provided by Lys269 and Asp274. The active site involves Lys281. Mn(2+)-binding residues include Asp292, Asp351, and Glu353. Arg355 is an active-site residue.

This sequence belongs to the peptidase M17 family. The cofactor is Mn(2+).

The protein localises to the cytoplasm. It catalyses the reaction Release of an N-terminal amino acid, Xaa-|-Yaa-, in which Xaa is preferably Leu, but may be other amino acids including Pro although not Arg or Lys, and Yaa may be Pro. Amino acid amides and methyl esters are also readily hydrolyzed, but rates on arylamides are exceedingly low.. The catalysed reaction is Release of an N-terminal amino acid, preferentially leucine, but not glutamic or aspartic acids.. Its function is as follows. Presumably involved in the processing and regular turnover of intracellular proteins. Catalyzes the removal of unsubstituted N-terminal amino acids from various peptides. This chain is Probable cytosol aminopeptidase, found in Aliivibrio fischeri (strain MJ11) (Vibrio fischeri).